The chain runs to 285 residues: Phosphatidylserine decarboxylase proenzyme (285 aa).

Active-site charge relay system; for autoendoproteolytic cleavage activity residues include D96, H152, and S250. S250 acts as the Schiff-base intermediate with substrate; via pyruvic acid; for decarboxylase activity in catalysis. A Pyruvic acid (Ser); by autocatalysis modification is found at S250.

It belongs to the phosphatidylserine decarboxylase family. PSD-B subfamily. Prokaryotic type I sub-subfamily. As to quaternary structure, heterodimer of a large membrane-associated beta subunit and a small pyruvoyl-containing alpha subunit. Pyruvate serves as cofactor. Post-translationally, is synthesized initially as an inactive proenzyme. Formation of the active enzyme involves a self-maturation process in which the active site pyruvoyl group is generated from an internal serine residue via an autocatalytic post-translational modification. Two non-identical subunits are generated from the proenzyme in this reaction, and the pyruvate is formed at the N-terminus of the alpha chain, which is derived from the carboxyl end of the proenzyme. The autoendoproteolytic cleavage occurs by a canonical serine protease mechanism, in which the side chain hydroxyl group of the serine supplies its oxygen atom to form the C-terminus of the beta chain, while the remainder of the serine residue undergoes an oxidative deamination to produce ammonia and the pyruvoyl prosthetic group on the alpha chain. During this reaction, the Ser that is part of the protease active site of the proenzyme becomes the pyruvoyl prosthetic group, which constitutes an essential element of the active site of the mature decarboxylase.

Its subcellular location is the cell membrane. The enzyme catalyses a 1,2-diacyl-sn-glycero-3-phospho-L-serine + H(+) = a 1,2-diacyl-sn-glycero-3-phosphoethanolamine + CO2. Its pathway is phospholipid metabolism; phosphatidylethanolamine biosynthesis; phosphatidylethanolamine from CDP-diacylglycerol: step 2/2. Catalyzes the formation of phosphatidylethanolamine (PtdEtn) from phosphatidylserine (PtdSer). The chain is Phosphatidylserine decarboxylase proenzyme from Acinetobacter baylyi (strain ATCC 33305 / BD413 / ADP1).